A 774-amino-acid polypeptide reads, in one-letter code: RNA exonuclease 5 (774 aa).

Residues 1 to 19 (MEPEREGTERHPRKVRESR) are compositionally biased toward basic and acidic residues. Positions 1-22 (MEPEREGTERHPRKVRESRQAP) are disordered. Positions 228–376 (LFGLDCEMCL…EDARTILELA (149 aa)) constitute an Exonuclease domain. 2 RRM domains span residues 505-579 (STVY…RPVT) and 600-679 (GSIY…RHLH).

This Homo sapiens (Human) protein is RNA exonuclease 5.